Here is a 255-residue protein sequence, read N- to C-terminus: tRNA (guanine-N(1)-)-methyltransferase (255 aa).

Residues G113 and 133 to 138 (IGDYVL) each bind S-adenosyl-L-methionine.

This sequence belongs to the RNA methyltransferase TrmD family. As to quaternary structure, homodimer.

It localises to the cytoplasm. The catalysed reaction is guanosine(37) in tRNA + S-adenosyl-L-methionine = N(1)-methylguanosine(37) in tRNA + S-adenosyl-L-homocysteine + H(+). Its function is as follows. Specifically methylates guanosine-37 in various tRNAs. The protein is tRNA (guanine-N(1)-)-methyltransferase of Salmonella choleraesuis (strain SC-B67).